Consider the following 415-residue polypeptide: Alditol oxidase (415 aa).

Residues 12 to 179 (ITYTAKEVHR…TALTLDLEPA (168 aa)) form the FAD-binding PCMH-type domain. A Pros-8alpha-FAD histidine modification is found at H46. FAD-binding positions include S106, S111, G114, 118 to 121 (TGTH), and V169. S106 provides a ligand contact to xylitol. Residues E317, R319, and T342 each coordinate xylitol. Position 319 (R319) interacts with FAD. H369 contributes to the FAD binding site. K372 contributes to the xylitol binding site.

This sequence belongs to the oxygen-dependent FAD-linked oxidoreductase family. As to quaternary structure, monomer. FAD is required as a cofactor.

The enzyme catalyses an alditol + O2 = an aldose + H2O2. It catalyses the reaction xylitol + O2 = D-xylose + H2O2. The catalysed reaction is D-sorbitol + O2 = D-glucose + H2O2. In terms of biological role, oxidase that performs selective oxidation of the terminal primary hydroxyl group of several alditols, with a reduction of O2 to H2O2. Shows highest activity on xylitol and D-sorbitol, and to a lesser extent, can also use galactitol, D-mannitol, and D-arabitol as substrates in vitro. Is not active on D-glucose, D-xylose, D-galactose, D-mannose, D-fructose, L-sorbose, L-fucose, myoinositol, glycerol, ethyl alcohol, and meso-erythritol. The sequence is that of Alditol oxidase from Streptomyces sp. (strain IKD472 / FERM P-14339).